A 313-amino-acid chain; its full sequence is Endo-beta-N-acetylglucosaminidase H (313 aa).

A signal peptide (or 44) is located at residues 1–42; it reads MFTPVRRRVRTAALALSAAAALVLGSTAASGASATPSPAPAP. The region spanning 51–307 is the GH18 domain; sequence PTSVAYVEVN…SAFTRELYGS (257 aa). The active-site Proton donor is E174.

It belongs to the glycosyl hydrolase 18 family.

The catalysed reaction is an N(4)-(oligosaccharide-(1-&gt;3)-[oligosaccharide-(1-&gt;6)]-beta-D-Man-(1-&gt;4)-beta-D-GlcNAc-(1-&gt;4)-alpha-D-GlcNAc)-L-asparaginyl-[protein] + H2O = an oligosaccharide-(1-&gt;3)-[oligosaccharide-(1-&gt;6)]-beta-D-Man-(1-&gt;4)-D-GlcNAc + N(4)-(N-acetyl-beta-D-glucosaminyl)-L-asparaginyl-[protein]. Its function is as follows. Cleaves asparagine-linked oligomannose and hybrid, but not complex, oligosaccharides from glycoproteins. The chain is Endo-beta-N-acetylglucosaminidase H from Streptomyces plicatus.